Reading from the N-terminus, the 640-residue chain is F-box protein MET30 (640 aa).

Residues 1 to 19 (MRRERQRMMSFEDKDKDDL) show a composition bias toward basic and acidic residues. The interval 1–84 (MRRERQRMMS…ATNDSGTRVQ (84 aa)) is disordered. Residues 1–299 (MRRERQRMMS…KGHCRIQEFK (299 aa)) form a necessary to mediate nuclear localization region. Composition is skewed to polar residues over residues 45–56 (TGSSDDLAQGSS) and 64–82 (ATRS…SGTR). The residue at position 67 (Ser67) is a Phosphoserine. Residues 180–225 (KIDFISILPQELSLKILSYLDCQSLCNATRVCRKWQKLADDDRVWY) form an interaction with SKP1/CBF3D region. The segment at 180-277 (KIDFISILPQ…TQTTRPWKVI (98 aa)) is important for mediating homomultimerization. An F-box domain is found at 181-227 (IDFISILPQELSLKILSYLDCQSLCNATRVCRKWQKLADDDRVWYHM). The segment at 277-640 (IYRERFKVES…VKMYKFDLND (364 aa)) is interaction with MET4. WD repeat units lie at residues 300-328 (GHMD…GIWD), 340-368 (GHSD…RVWN), 380-408 (GHSD…KVWH), 419-449 (GHTE…RMWD), 461-499 (GHVG…TMTD), 509-538 (NEQE…KLWD), 550-578 (GHVE…KVWD), and 607-635 (DKVA…KMYK). The span at 481–495 (ATDNTSDGSSPQDDP) shows a compositional bias: polar residues. The tract at residues 481 to 516 (ATDNTSDGSSPQDDPTMTDGADESDTPSNEQETVLD) is disordered.

It belongs to the WD repeat MET30/SCONB/SCON-2 family. In terms of assembly, homomultimer. Interacts with CDC53 and SKP1/CBF3D to form the E3 ubiquitin ligase complex SCF(Met30). Interacts with MET4.

The protein localises to the cytoplasm. The protein resides in the nucleus. It participates in protein modification; protein ubiquitination. Functionally, substrate-recognition component of the SCF(Met30) complex, an E3 ubiquitin ligase complex that mediates the ubiquitination and subsequent proteasomal degradation of target proteins. Negatively regulates sulfur amino acids biosynthesis genes expression. Controls cell cycle function (being required for the G1/S transition and M-phase but not the S-phase), sulfur metabolism, and methionine biosynthesis as part of the SCF(Met30) complex. Required for the efficient binding of CDC45 and MCM proteins to origins of replication. Required for efficient expression of G1 cyclins. The SCF(Met30) complex catalyzes ubiquitination and degradation of the Cdk-inhibitory kinase SWE1. Involved in the S-adenosylmethionine (AdoMet)-mediated inhibition of the transcription function of MET4. The SCF(Met30) complex mediates ubiquitination and subsequent degradation of MET4 and the cellular response to cadmium. The SCF(Met30) complex acts as an inhibitor of autophagy by promoting ubiquitination and degradation of ATG9 in normal conditions. This chain is F-box protein MET30, found in Saccharomyces cerevisiae (strain ATCC 204508 / S288c) (Baker's yeast).